Reading from the N-terminus, the 222-residue chain is N-(5'-phosphoribosyl)anthranilate isomerase (222 aa).

The protein belongs to the TrpF family.

The catalysed reaction is N-(5-phospho-beta-D-ribosyl)anthranilate = 1-(2-carboxyphenylamino)-1-deoxy-D-ribulose 5-phosphate. It functions in the pathway amino-acid biosynthesis; L-tryptophan biosynthesis; L-tryptophan from chorismate: step 3/5. The chain is N-(5'-phosphoribosyl)anthranilate isomerase from Rhizobium etli (strain CIAT 652).